The following is a 214-amino-acid chain: Probable transaldolase (214 aa).

Lys-83 (schiff-base intermediate with substrate) is an active-site residue.

It belongs to the transaldolase family. Type 3B subfamily.

It localises to the cytoplasm. It carries out the reaction D-sedoheptulose 7-phosphate + D-glyceraldehyde 3-phosphate = D-erythrose 4-phosphate + beta-D-fructose 6-phosphate. It participates in carbohydrate degradation; pentose phosphate pathway; D-glyceraldehyde 3-phosphate and beta-D-fructose 6-phosphate from D-ribose 5-phosphate and D-xylulose 5-phosphate (non-oxidative stage): step 2/3. Functionally, transaldolase is important for the balance of metabolites in the pentose-phosphate pathway. In Clostridium tetani (strain Massachusetts / E88), this protein is Probable transaldolase.